The chain runs to 462 residues: uncharacterized protein (462 aa).

The next 2 membrane-spanning stretches (helical) occupy residues 12 to 32 (WWWL…APTV) and 257 to 277 (GLCV…LELV).

This sequence belongs to the HHV-5 US29 protein family.

Its subcellular location is the host membrane. This is an uncharacterized protein from Human cytomegalovirus (strain AD169) (HHV-5).